A 329-amino-acid chain; its full sequence is Isopenicillin N synthase (329 aa).

Residues Arg-87, Tyr-91, Ser-183, and Tyr-189 each contribute to the isopenicillin N site. Positions 87, 91, 183, 189, 212, and 214 each coordinate N-[(5S)-5-amino-5-carboxypentanoyl]-L-cysteinyl-D-valine. In terms of domain architecture, Fe2OG dioxygenase spans 180–286 (TLSSVSLIRY…RLSLPFFLNA (107 aa)). Residues His-212, Asp-214, and His-268 each contribute to the Fe(2+) site. A 2-oxoglutarate-binding site is contributed by Arg-277. Ser-279 contributes to the isopenicillin N binding site. Residue Ser-279 participates in N-[(5S)-5-amino-5-carboxypentanoyl]-L-cysteinyl-D-valine binding.

It belongs to the iron/ascorbate-dependent oxidoreductase family. The cofactor is Fe cation. L-ascorbate is required as a cofactor.

The enzyme catalyses N-[(5S)-5-amino-5-carboxypentanoyl]-L-cysteinyl-D-valine + O2 = isopenicillin N + 2 H2O. It functions in the pathway antibiotic biosynthesis; penicillin G biosynthesis; penicillin G from L-alpha-aminoadipate and L-cysteine and L-valine: step 2/3. Removes, in the presence of oxygen, 4 hydrogen atoms from delta-L-(alpha-aminoadipyl)-L-cysteinyl-D-valine (ACV) to form the azetidinone and thiazolidine rings of isopenicillin. This chain is Isopenicillin N synthase (pcbC), found in Streptomyces jumonjinensis.